We begin with the raw amino-acid sequence, 616 residues long: Chaperone protein HscA (616 aa).

Belongs to the heat shock protein 70 family.

Functionally, chaperone involved in the maturation of iron-sulfur cluster-containing proteins. Has a low intrinsic ATPase activity which is markedly stimulated by HscB. Involved in the maturation of IscU. This chain is Chaperone protein HscA, found in Photorhabdus laumondii subsp. laumondii (strain DSM 15139 / CIP 105565 / TT01) (Photorhabdus luminescens subsp. laumondii).